A 1478-amino-acid polypeptide reads, in one-letter code: MYKQFKKRSKKPLNTIDENATIKVPRLAETTTNISVESSSGGSEENIPASQEHTQRFLSQHSVILAATLGRTQSSSRNIATLSRQPNNFFELVLVRAGVQLDQGDSLILACDHVPIVSKLREIFTSASSYTDKMETFKTGLNAAMAPGSKLVQKLLTGCTVDAAGEEQIYQSQNSMFMNFLMIDFMRDACVEVLLNKIEEVAKSDRVIMGKAAIPLPLLPLMLTQLRYLTASHKVEIYSRIEVIFNRATESAKLDIIANAELILDASMHDEFVELLNINYSSTEDLFHMTTVQTLGNLSLSDRTQAKLRVRILDFATSGQCSDAILPHLIRLLLNVLKIDTDDSVRDLIGSLRGIFNWRHTNETEKISASEDSKKSQLELFGFLELGLIRSKKFYQACQRSSASVPAAEFTSFDMILLLLLIHVNEDNSLYIENILRRRIKLEHITVSILEEIRQHYRHILEQHITTLMNILHDFMREKNRIVSDFAKSSYSILFKIFNSIQKNILKKLLELTCDKSSPHLTTMALELLRELQRKSAKDVQNCATLLIPMLDRISDLSLTQTRVAMDLLCHVAFPDPNLSPCLQLQEQVDMVVKKQLINSIDNIKKQGIIGCVQLIDAMARIANNGVDRDEFIASVENVDSLPDGRGKMAANLIIRTEASIGNSTESLALFFEELATVFNQRNEGTSGCELDNQFIAWACDLVTFRFQASFVTENVPETLKGIKLEYQLNINELDDTDANTESDVLNIGINISKLVLSPKVKACDSIYVLAPLFNYVRVLYKHRHQDSLESINALLGCAIVLPSFFEDDNYVSVFENFEAEQQKDILSIYFHTVNWMRVSISAFASQRDPPTRRRVLSRLGELIRIEQRMKPLLARAPVDFVAPPYQFLTNVKLSNQNQKRPGPKPAAKLNATLPEPDLTGNQPSIADFTIKVGQCKTVKTKTDFEQMYGPRERYRPMEVEIIMLLVEQKFVLNHQLEEEQMGEFLGLLELRFLLEDVVQKLEAAVLRHHDSYDADSFRPHLAKPEDFICDLLPCLHEVNNHLITLGEAIDNQLTEVSHVYSNLDLFKDQFCYIKSCFGLCVRLFALYFAWSEWSDKSQEQLLHKSLLKLQPKTQWKRLEKQSVPQLANLTFQYFLKYEKSVLNLSTAVHLHRLLCNLLKLGSLQSDASQPRFQQAEDLRILCGTLLRRKWFHYSGTLDKGGQCNIYLDELVKGFLKKSNAKSQTELLTELVKQCSILNTKDKALTSFPNFKKANFPLLFRGLCEVLIHSLSGQVSVDSRGDKLKLWESAVDLLNGLLSIVQQVEQPRNFGLFLKHSLLFLKLLLQHGMSALESIVREDPERLTRFLHELQKVTRFLHQLCCHSKSIKNTAIISYIPSLRETIETLVFRVKALLAANNCHSAFHMGNMINRDLHGDSIITPRSSFAGEENSDDELPADDTSVDETVLGDDMGITAVSVSTRPSDGSRRSKSSSRSKCF.

Residues 33–53 (NISVESSSGGSEENIPASQEH) form a disordered region. A compositionally biased stretch (low complexity) spans 35–45 (SVESSSGGSEE). Lysine 595 is covalently cross-linked (Glycyl lysine isopeptide (Lys-Gly) (interchain with G-Cter in ubiquitin)). Disordered stretches follow at residues 896 to 918 (NQNQ…PEPD) and 1420 to 1478 (TPRS…SKCF). Residues 1429–1442 (ENSDDELPADDTSV) show a composition bias toward acidic residues. Residues 1468 to 1478 (RSKSSSRSKCF) are compositionally biased toward basic residues.

Belongs to the Fanconi anemia protein FANCD2 family. In terms of assembly, homodimer; cannot be ubiquitinated and does not bind DNA. Part of a Fanci-Fancd2 heterodimeric complex that binds and scans dsDNA for DNA damage. Interacts with Fancl (via C-terminus). Monoubiquitinated by Fancl in response to ionising radiation.

The protein resides in the nucleus. Its function is as follows. Required for maintenance of chromosomal stability. Together with Fancl, and probably Fanci, involved in DNA repair of damage caused by agents that induce interstrand cross-links but not agents that cause double strand breaks. Required for S phase checkpoint activation in response to ionizing radiation induced DNA damage. The sequence is that of Fanconi anemia group D2 protein homolog from Drosophila melanogaster (Fruit fly).